Consider the following 397-residue polypeptide: Acetate kinase 2 (397 aa).

Position 10 (N10) interacts with Mg(2+). K17 is an ATP binding site. R90 is a binding site for substrate. The active-site Proton donor/acceptor is D147. ATP contacts are provided by residues 207–211 (HLGNG), 281–283 (DAR), and 329–333 (GIGEN). Residue E385 participates in Mg(2+) binding.

The protein belongs to the acetokinase family. In terms of assembly, homodimer. The cofactor is Mg(2+). Mn(2+) serves as cofactor.

Its subcellular location is the cytoplasm. The enzyme catalyses acetate + ATP = acetyl phosphate + ADP. The protein operates within metabolic intermediate biosynthesis; acetyl-CoA biosynthesis; acetyl-CoA from acetate: step 1/2. Catalyzes the formation of acetyl phosphate from acetate and ATP. Can also catalyze the reverse reaction. This chain is Acetate kinase 2, found in Vibrio parahaemolyticus serotype O3:K6 (strain RIMD 2210633).